Reading from the N-terminus, the 102-residue chain is Small ribosomal subunit protein uS10 (102 aa).

It belongs to the universal ribosomal protein uS10 family. As to quaternary structure, part of the 30S ribosomal subunit.

Functionally, involved in the binding of tRNA to the ribosomes. The sequence is that of Small ribosomal subunit protein uS10 from Malacoplasma penetrans (strain HF-2) (Mycoplasma penetrans).